Here is a 68-residue protein sequence, read N- to C-terminus: Beta-defensin 1 (68 aa).

Residues 1–21 (MRTSYLLLFTLCLLLSEMASG) form the signal peptide. Residues 22–32 (DNFLTGLGHRS) constitute a propeptide that is removed on maturation. 3 disulfide bridges follow: Cys-37/Cys-66, Cys-44/Cys-59, and Cys-49/Cys-67.

Belongs to the beta-defensin family. Monomer. Homodimer.

Its subcellular location is the secreted. The protein resides in the membrane. Its function is as follows. Has bactericidal activity. May act as a ligand for C-C chemokine receptor CCR6. Positively regulates the sperm motility and bactericidal activity in a CCR6-dependent manner. Binds to CCR6 and triggers Ca2+ mobilization in the sperm which is important for its motility. This chain is Beta-defensin 1 (DEFB1), found in Hylobates moloch (Silvery gibbon).